Reading from the N-terminus, the 360-residue chain is Membrane-bound lytic murein transglycosylase C (360 aa).

An N-terminal signal peptide occupies residues 1-16 (MKKIFALALIAPLLIS). A lipid anchor (N-palmitoyl cysteine) is attached at Cys-17. A lipid anchor (S-diacylglycerol cysteine) is attached at Cys-17.

The protein belongs to the transglycosylase Slt family.

The protein localises to the cell outer membrane. The enzyme catalyses Exolytic cleavage of the (1-&gt;4)-beta-glycosidic linkage between N-acetylmuramic acid (MurNAc) and N-acetylglucosamine (GlcNAc) residues in peptidoglycan, from either the reducing or the non-reducing ends of the peptidoglycan chains, with concomitant formation of a 1,6-anhydrobond in the MurNAc residue.. Its function is as follows. Murein-degrading enzyme. May play a role in recycling of muropeptides during cell elongation and/or cell division. The polypeptide is Membrane-bound lytic murein transglycosylase C (Cronobacter sakazakii (strain ATCC BAA-894) (Enterobacter sakazakii)).